The following is a 580-amino-acid chain: Adenine deaminase 2 (580 aa).

The protein belongs to the metallo-dependent hydrolases superfamily. Adenine deaminase family. The cofactor is Mn(2+).

The catalysed reaction is adenine + H2O + H(+) = hypoxanthine + NH4(+). The sequence is that of Adenine deaminase 2 from Latilactobacillus sakei subsp. sakei (strain 23K) (Lactobacillus sakei subsp. sakei).